Here is a 902-residue protein sequence, read N- to C-terminus: DNA mismatch repair protein MutS (902 aa).

Position 654 to 661 (654 to 661 (GPNMGGKS)) interacts with ATP.

This sequence belongs to the DNA mismatch repair MutS family.

In terms of biological role, this protein is involved in the repair of mismatches in DNA. It is possible that it carries out the mismatch recognition step. This protein has a weak ATPase activity. The polypeptide is DNA mismatch repair protein MutS (Xanthomonas axonopodis pv. citri (strain 306)).